The following is a 678-amino-acid chain: Dol-P-Man:Man(7)GlcNAc(2)-PP-Dol alpha-1,6-mannosyltransferase (678 aa).

A run of 11 helical transmembrane segments spans residues 1–21, 56–76, 81–101, 109–129, 133–153, 168–188, 200–220, 252–272, 279–299, 301–321, and 334–354; these read MDIL…FTKV, FIGP…FETL, FWAQ…AWNS, IYGV…FHFM, TRPL…AYWL, ILVF…VSLL, VALP…SFFW, FYSA…IGVA, PLVL…HKEL, FIIY…QRIW, and ALAC…LLVI.

The protein belongs to the glycosyltransferase 22 family.

The protein resides in the endoplasmic reticulum membrane. It catalyses the reaction an alpha-D-Man-(1-&gt;2)-alpha-D-Man-(1-&gt;2)-alpha-D-Man-(1-&gt;3)-[alpha-D-Man-(1-&gt;2)-alpha-D-Man-(1-&gt;3)-alpha-D-Man-(1-&gt;6)]-beta-D-Man-(1-&gt;4)-beta-D-GlcNAc-(1-&gt;4)-alpha-D-GlcNAc-diphospho-di-trans,poly-cis-dolichol + a di-trans,poly-cis-dolichyl beta-D-mannosyl phosphate = an alpha-D-Man-(1-&gt;2)-alpha-D-Man-(1-&gt;2)-alpha-D-Man-(1-&gt;3)-[alpha-D-Man-(1-&gt;2)-alpha-D-Man-(1-&gt;3)-[alpha-D-Man-(1-&gt;6)]-alpha-D-Man-(1-&gt;6)]-beta-D-Man-(1-&gt;4)-beta-D-GlcNAc-(1-&gt;4)-alpha-D-GlcNAc-diphospho-di-trans,poly-cis-dolichol + a di-trans,poly-cis-dolichyl phosphate + H(+). Its pathway is protein modification; protein glycosylation. Functionally, mannosyltransferase that operates in the biosynthetic pathway of dolichol-linked oligosaccharides, the glycan precursors employed in protein asparagine (N)-glycosylation. The assembly of dolichol-linked oligosaccharides begins on the cytosolic side of the endoplasmic reticulum membrane and finishes in its lumen. The sequential addition of sugars to dolichol pyrophosphate produces dolichol-linked oligosaccharides containing fourteen sugars, including two GlcNAcs, nine mannoses and three glucoses. Once assembled, the oligosaccharide is transferred from the lipid to nascent proteins by oligosaccharyltransferases. In the lumen of the endoplasmic reticulum, adds the eighth mannose residue in an alpha-1,6 linkage onto Man(7)GlcNAc(2)-PP-dolichol to produce Man(8)GlcNAc(2)-PP-dolichol. This Drosophila melanogaster (Fruit fly) protein is Dol-P-Man:Man(7)GlcNAc(2)-PP-Dol alpha-1,6-mannosyltransferase.